The primary structure comprises 419 residues: Phospho-N-acetylmuramoyl-pentapeptide-transferase (419 aa).

The next 10 membrane-spanning stretches (helical) occupy residues 22 to 42 (YVSF…TVIG), 72 to 92 (TPTM…LLLA), 99 to 119 (ILLM…DDYI), 135 to 155 (IIGQ…NPAV), 208 to 228 (VLFG…FISN), 238 to 258 (GLAT…AYVS), 278 to 298 (LTIF…YNAY), 303 to 323 (FMGD…ALII), 328 to 348 (LLPI…IQVF), and 396 to 416 (KITV…IATL).

This sequence belongs to the glycosyltransferase 4 family. MraY subfamily. Mg(2+) is required as a cofactor.

The protein localises to the cell inner membrane. The catalysed reaction is UDP-N-acetyl-alpha-D-muramoyl-L-alanyl-gamma-D-glutamyl-meso-2,6-diaminopimeloyl-D-alanyl-D-alanine + di-trans,octa-cis-undecaprenyl phosphate = di-trans,octa-cis-undecaprenyl diphospho-N-acetyl-alpha-D-muramoyl-L-alanyl-D-glutamyl-meso-2,6-diaminopimeloyl-D-alanyl-D-alanine + UMP. Its pathway is cell wall biogenesis; peptidoglycan biosynthesis. Functionally, catalyzes the initial step of the lipid cycle reactions in the biosynthesis of the cell wall peptidoglycan: transfers peptidoglycan precursor phospho-MurNAc-pentapeptide from UDP-MurNAc-pentapeptide onto the lipid carrier undecaprenyl phosphate, yielding undecaprenyl-pyrophosphoryl-MurNAc-pentapeptide, known as lipid I. In Porphyromonas gingivalis (strain ATCC BAA-308 / W83), this protein is Phospho-N-acetylmuramoyl-pentapeptide-transferase.